The sequence spans 284 residues: 2,3,4,5-tetrahydropyridine-2,6-dicarboxylate N-succinyltransferase (284 aa).

Belongs to the transferase hexapeptide repeat family.

It localises to the cytoplasm. The catalysed reaction is (S)-2,3,4,5-tetrahydrodipicolinate + succinyl-CoA + H2O = (S)-2-succinylamino-6-oxoheptanedioate + CoA. Its pathway is amino-acid biosynthesis; L-lysine biosynthesis via DAP pathway; LL-2,6-diaminopimelate from (S)-tetrahydrodipicolinate (succinylase route): step 1/3. This is 2,3,4,5-tetrahydropyridine-2,6-dicarboxylate N-succinyltransferase from Brucella abortus (strain S19).